The following is a 199-amino-acid chain: dITP/XTP pyrophosphatase (199 aa).

A substrate-binding site is contributed by 8-13 (TRNKGK). Glu41 and Asp70 together coordinate Mg(2+). The active-site Proton acceptor is Asp70. Substrate contacts are provided by residues Ser71, 153–156 (FGYD), Lys176, and 181–182 (HR).

The protein belongs to the HAM1 NTPase family. Homodimer. Requires Mg(2+) as cofactor.

The catalysed reaction is XTP + H2O = XMP + diphosphate + H(+). It catalyses the reaction dITP + H2O = dIMP + diphosphate + H(+). It carries out the reaction ITP + H2O = IMP + diphosphate + H(+). Its function is as follows. Pyrophosphatase that catalyzes the hydrolysis of nucleoside triphosphates to their monophosphate derivatives, with a high preference for the non-canonical purine nucleotides XTP (xanthosine triphosphate), dITP (deoxyinosine triphosphate) and ITP. Seems to function as a house-cleaning enzyme that removes non-canonical purine nucleotides from the nucleotide pool, thus preventing their incorporation into DNA/RNA and avoiding chromosomal lesions. In Geobacter sulfurreducens (strain ATCC 51573 / DSM 12127 / PCA), this protein is dITP/XTP pyrophosphatase.